The chain runs to 337 residues: Alcohol dehydrogenase (337 aa).

Residues cysteine 38, histidine 61, cysteine 92, cysteine 95, cysteine 98, cysteine 106, and cysteine 148 each contribute to the Zn(2+) site. NAD(+) contacts are provided by residues 172–177 (GIGGLG), aspartate 195, lysine 200, 260–262 (VGL), and arginine 331.

The protein belongs to the zinc-containing alcohol dehydrogenase family. Requires Zn(2+) as cofactor.

It catalyses the reaction a primary alcohol + NAD(+) = an aldehyde + NADH + H(+). It carries out the reaction a secondary alcohol + NAD(+) = a ketone + NADH + H(+). Its activity is regulated as follows. Substrate inhibition is not observed with any alcohols, and the enzyme-NADH dissociation is not considered to be a rate-limiting step. Functionally, NAD(+)-dependent alcohol dehydrogenase. In Geobacillus stearothermophilus (Bacillus stearothermophilus), this protein is Alcohol dehydrogenase (adhT).